A 338-amino-acid polypeptide reads, in one-letter code: Aspartate carbamoyltransferase catalytic subunit (338 aa).

Residues Arg-72 and Thr-73 each coordinate carbamoyl phosphate. Lys-100 is a binding site for L-aspartate. Positions 122, 152, and 155 each coordinate carbamoyl phosphate. L-aspartate-binding residues include Arg-186 and Arg-243. Gly-284 and Pro-285 together coordinate carbamoyl phosphate.

Belongs to the aspartate/ornithine carbamoyltransferase superfamily. ATCase family. Heterododecamer (2C3:3R2) of six catalytic PyrB chains organized as two trimers (C3), and six regulatory PyrI chains organized as three dimers (R2).

It carries out the reaction carbamoyl phosphate + L-aspartate = N-carbamoyl-L-aspartate + phosphate + H(+). The protein operates within pyrimidine metabolism; UMP biosynthesis via de novo pathway; (S)-dihydroorotate from bicarbonate: step 2/3. Its function is as follows. Catalyzes the condensation of carbamoyl phosphate and aspartate to form carbamoyl aspartate and inorganic phosphate, the committed step in the de novo pyrimidine nucleotide biosynthesis pathway. In Acinetobacter baumannii (strain AB307-0294), this protein is Aspartate carbamoyltransferase catalytic subunit.